The sequence spans 56 residues: Protein hunchback (56 aa).

3 C2H2-type zinc fingers span residues 1–5 (HVRNH), 11–33 (HKCG…MKSH), and 39–56 (YRCA…SLKL).

It belongs to the hunchback C2H2-type zinc-finger protein family.

The protein resides in the nucleus. Its function is as follows. Gap class segmentation protein that controls development of head structures. The protein is Protein hunchback (hb) of Bithynia tentaculata (Spire snail).